Consider the following 473-residue polypeptide: L-seryl-tRNA(Sec) selenium transferase (473 aa).

At Lys-302 the chain carries N6-(pyridoxal phosphate)lysine.

Belongs to the SelA family. The cofactor is pyridoxal 5'-phosphate.

Its subcellular location is the cytoplasm. It carries out the reaction L-seryl-tRNA(Sec) + selenophosphate + H(+) = L-selenocysteinyl-tRNA(Sec) + phosphate. It functions in the pathway aminoacyl-tRNA biosynthesis; selenocysteinyl-tRNA(Sec) biosynthesis; selenocysteinyl-tRNA(Sec) from L-seryl-tRNA(Sec) (bacterial route): step 1/1. Functionally, converts seryl-tRNA(Sec) to selenocysteinyl-tRNA(Sec) required for selenoprotein biosynthesis. In Shewanella oneidensis (strain ATCC 700550 / JCM 31522 / CIP 106686 / LMG 19005 / NCIMB 14063 / MR-1), this protein is L-seryl-tRNA(Sec) selenium transferase.